We begin with the raw amino-acid sequence, 954 residues long: Glycine dehydrogenase (decarboxylating) (954 aa).

Lys-701 bears the N6-(pyridoxal phosphate)lysine mark.

Belongs to the GcvP family. In terms of assembly, the glycine cleavage system is composed of four proteins: P, T, L and H. Pyridoxal 5'-phosphate serves as cofactor.

The catalysed reaction is N(6)-[(R)-lipoyl]-L-lysyl-[glycine-cleavage complex H protein] + glycine + H(+) = N(6)-[(R)-S(8)-aminomethyldihydrolipoyl]-L-lysyl-[glycine-cleavage complex H protein] + CO2. Functionally, the glycine cleavage system catalyzes the degradation of glycine. The P protein binds the alpha-amino group of glycine through its pyridoxal phosphate cofactor; CO(2) is released and the remaining methylamine moiety is then transferred to the lipoamide cofactor of the H protein. This Bordetella pertussis (strain Tohama I / ATCC BAA-589 / NCTC 13251) protein is Glycine dehydrogenase (decarboxylating).